The following is a 300-amino-acid chain: Enoyl-CoA hydratase domain-containing protein 3, mitochondrial (300 aa).

Residues 1 to 66 (MALVAGLRAF…RNIVLSNPRR (66 aa)) constitute a mitochondrion transit peptide. A disordered region spans residues 32 to 54 (SPGSARPAGPESEPRLTSTRQQD). Lys-110 carries the post-translational modification N6-succinyllysine.

Belongs to the enoyl-CoA hydratase/isomerase family.

It is found in the mitochondrion. In terms of biological role, may play a role in fatty acid biosynthesis and insulin sensitivity. This is Enoyl-CoA hydratase domain-containing protein 3, mitochondrial from Rattus norvegicus (Rat).